A 335-amino-acid polypeptide reads, in one-letter code: uncharacterized protein (335 aa).

3 Solcar repeats span residues Val22–Leu129, Gly134–Phe227, and Lys244–Tyr327. The next 6 membrane-spanning stretches (helical) occupy residues Met28–Val48, Gly104–Tyr123, Trp133–Val154, Gly195–Trp219, Leu246–Leu263, and Cys307–Leu323.

Belongs to the mitochondrial carrier (TC 2.A.29) family.

Its subcellular location is the mitochondrion inner membrane. This is an uncharacterized protein from Schizosaccharomyces pombe (strain 972 / ATCC 24843) (Fission yeast).